The chain runs to 169 residues: Large ribosomal subunit protein uL15 (169 aa).

A compositionally biased stretch (basic and acidic residues) spans 1–13; that stretch reads MKLNEIRDNEGAT. The segment at 1–40 is disordered; it reads MKLNEIRDNEGATKNRMRVGRGIGSGKGKTGGRGVKGQKA. The segment covering 21 to 35 has biased composition (gly residues); the sequence is RGIGSGKGKTGGRGV.

It belongs to the universal ribosomal protein uL15 family. As to quaternary structure, part of the 50S ribosomal subunit.

Binds to the 23S rRNA. This is Large ribosomal subunit protein uL15 from Methylorubrum populi (strain ATCC BAA-705 / NCIMB 13946 / BJ001) (Methylobacterium populi).